A 163-amino-acid chain; its full sequence is MKWKALFTAAILQAQLPITEAQSFGLLDPKLCYLLDGILFIYGVILTALFLRVKFSRSADAPAYQQGQNQLYNELNLGRREEYDVLDKRRGRDPEMGGKPRRKNPQEGLYNELQKDKMAEAYSEIGMKGERRRGKGHDGLYQGLSTATKDTYDALHMQALPPR.

The signal sequence occupies residues methionine 1–alanine 21. Residues glutamine 22 to lysine 30 lie on the Extracellular side of the membrane. The helical transmembrane segment at leucine 31–leucine 51 threads the bilayer. At arginine 52–arginine 163 the chain is on the cytoplasmic side. Serine 58 is subject to Phosphoserine. ITAM domains follow at residues alanine 61–arginine 89, lysine 99–methionine 127, and glutamate 130–glutamine 158. Residues tyrosine 64, tyrosine 72, tyrosine 83, tyrosine 110, tyrosine 122, tyrosine 141, and tyrosine 152 each carry the phosphotyrosine modification. Over residues tyrosine 83 to glycine 98 the composition is skewed to basic and acidic residues. A disordered region spans residues tyrosine 83 to asparagine 111.

It belongs to the CD3Z/FCER1G family. In terms of assembly, the TCR-CD3 complex is composed of a CD3D/CD3E and a CD3G/CD3E heterodimers that preferentially associate with TCRalpha and TCRbeta, respectively, to form TCRalpha/CD3E/CD3G and TCRbeta/CD3G/CD3E trimers. In turn, the hexamer interacts with CD3Z homodimer to form the TCR-CD3 complex. Alternatively, TCRalpha and TCRbeta can be replaced by TCRgamma and TCRdelta. Interacts with SLA. Interacts with TRAT1. Interacts with DOCK2. Interacts with SLA2. Interacts with SHB. Interacts with ZAP70. Interacts (tyrosine phosphorylated) with SHC1 (via SH2 domain). Interacts with PTPRC. Interacts with CRK; this interaction regulates CD3Z phosphorylation. Interacts (on T cell side) with CD81, ICAM1 and CD9 at immunological synapses between antigen-presenting cells and T cells. Interacts with CD160. Interacts with LY6E. Interacts with LY6E. The signaling subunit of immunoglobulin gamma (IgG) Fc receptor complex. As a homodimer or a heterodimer with FCER1G, associates with the ligand binding subunit FCGR3A (via transmembrane domain); this interaction is a prerequisite for Fc receptor complex expression on the cell surface. Interacts with CD5. Post-translationally, phosphorylated on Tyr residues after T-cell receptor triggering by LCK in association with CD4/CD8.

The protein localises to the cell membrane. Part of the TCR-CD3 complex present on T-lymphocyte cell surface that plays an essential role in adaptive immune response. When antigen presenting cells (APCs) activate T-cell receptor (TCR), TCR-mediated signals are transmitted across the cell membrane by the CD3 chains CD3D, CD3E, CD3G and CD3Z. All CD3 chains contain immunoreceptor tyrosine-based activation motifs (ITAMs) in their cytoplasmic domain. Upon TCR engagement, these motifs become phosphorylated by Src family protein tyrosine kinases LCK and FYN, resulting in the activation of downstream signaling pathways. CD3Z ITAMs phosphorylation creates multiple docking sites for the protein kinase ZAP70 leading to ZAP70 phosphorylation and its conversion into a catalytically active enzyme. Plays an important role in intrathymic T-cell differentiation. Additionally, participates in the activity-dependent synapse formation of retinal ganglion cells (RGCs) in both the retina and dorsal lateral geniculate nucleus (dLGN). The chain is T-cell surface glycoprotein CD3 zeta chain (CD247) from Sus scrofa (Pig).